Consider the following 174-residue polypeptide: Transcription antitermination protein NusB (174 aa).

It belongs to the NusB family.

Functionally, involved in transcription antitermination. Required for transcription of ribosomal RNA (rRNA) genes. Binds specifically to the boxA antiterminator sequence of the ribosomal RNA (rrn) operons. This is Transcription antitermination protein NusB from Rhodopseudomonas palustris (strain TIE-1).